A 334-amino-acid chain; its full sequence is Transcription initiation factor IIB (334 aa).

A TFIIB-type zinc finger spans residues 34 to 65 (TESVCPECKSRQLVHDYERAELVCQNCGLVID). Zn(2+)-binding residues include cysteine 38, cysteine 41, cysteine 57, and cysteine 60. Repeat copies occupy residues 151–234 (SELD…SREL) and 245–326 (DYVP…ELAE).

The protein belongs to the TFIIB family.

Stabilizes TBP binding to an archaeal box-A promoter. Also responsible for recruiting RNA polymerase II to the pre-initiation complex (DNA-TBP-TFIIB). In Methanosphaerula palustris (strain ATCC BAA-1556 / DSM 19958 / E1-9c), this protein is Transcription initiation factor IIB.